The sequence spans 150 residues: Large ribosomal subunit protein uL22c (150 aa).

The protein belongs to the universal ribosomal protein uL22 family. Part of the 50S ribosomal subunit.

It is found in the plastid. Its function is as follows. This protein binds specifically to 23S rRNA. In terms of biological role, the globular domain of the protein is located near the polypeptide exit tunnel on the outside of the subunit, while an extended beta-hairpin is found that lines the wall of the exit tunnel in the center of the 70S ribosome. The protein is Large ribosomal subunit protein uL22c (rpl22) of Orobanche minor (Small broomrape).